Here is a 304-residue protein sequence, read N- to C-terminus: MLKDIFRKKRKYATLSSLPPKNSEGGLAYFDEPSPEQESTRKELPDGLWVKCPKCGEALFNKDLVENQRVCLTCSYHFRIPARERLEHLVDPGSFAEWDRELQTTNPLSFPDYEEKLAEAYQKSDVSESVLTGQASIEGMPVVLAFNEGNFMMGSMGSVTGEKITRAIERAIELRCPVIIFSTSGGARMQEGILSLYQMAKTSAALGRLAEEGLLYISVLTDPTFGGVTASYASLGDIHIAEPGALIGFTGPRVIKQTMRKELPEGAQTAEFNQSHGQIDCVVERAEMRKVLGRLLRYHQEGAV.

The tract at residues 16 to 42 (SSLPPKNSEGGLAYFDEPSPEQESTRK) is disordered. Positions 48-304 (LWVKCPKCGE…LLRYHQEGAV (257 aa)) constitute a CoA carboxyltransferase N-terminal domain. Zn(2+) contacts are provided by Cys52, Cys55, Cys71, and Cys74. Residues 52–74 (CPKCGEALFNKDLVENQRVCLTC) form a C4-type zinc finger.

Belongs to the AccD/PCCB family. As to quaternary structure, acetyl-CoA carboxylase is a heterohexamer composed of biotin carboxyl carrier protein (AccB), biotin carboxylase (AccC) and two subunits each of ACCase subunit alpha (AccA) and ACCase subunit beta (AccD). Zn(2+) is required as a cofactor.

The protein resides in the cytoplasm. The enzyme catalyses N(6)-carboxybiotinyl-L-lysyl-[protein] + acetyl-CoA = N(6)-biotinyl-L-lysyl-[protein] + malonyl-CoA. It participates in lipid metabolism; malonyl-CoA biosynthesis; malonyl-CoA from acetyl-CoA: step 1/1. In terms of biological role, component of the acetyl coenzyme A carboxylase (ACC) complex. Biotin carboxylase (BC) catalyzes the carboxylation of biotin on its carrier protein (BCCP) and then the CO(2) group is transferred by the transcarboxylase to acetyl-CoA to form malonyl-CoA. The protein is Acetyl-coenzyme A carboxylase carboxyl transferase subunit beta of Desulfitobacterium hafniense (strain Y51).